Reading from the N-terminus, the 57-residue chain is Small hydrophobic protein (57 aa).

The Virion surface segment spans residues 1 to 8; that stretch reads MPAIQPPL. The chain crosses the membrane as a helical span at residues 9 to 29; it reads YLTFLLLILLYRIITLYVWVV. The Intravirion segment spans residues 30-57; the sequence is STITYKTAVRHAALYQRSLFRWSFDHSL.

This sequence belongs to the rubulavirus small hydrophobic protein family. Interacts with host TNFRSF1A, RIPK1 and IRAK1; these interactions interfere with host NF-kappa-B activation at the level of receptor complexes. Interacts with host protein UBQLN4.

The protein resides in the virion membrane. The protein localises to the host cell membrane. Plays a role in the inhibition of the host NF-kappa-B pathway. This inhibition occurs at the receptor level, by preventing the signaling of TNFR1 as well as IL-1R and TLR3. The polypeptide is Small hydrophobic protein (SH) (Mumps virus (strain Belfast) (MuV)).